An 840-amino-acid polypeptide reads, in one-letter code: Probable inorganic carbon transporter subunit DabA 2 (840 aa).

Zn(2+) contacts are provided by cysteine 356, aspartate 358, histidine 540, and cysteine 555.

Belongs to the inorganic carbon transporter (TC 9.A.2) DabA family. As to quaternary structure, forms a complex with DabB. Zn(2+) is required as a cofactor.

It localises to the cell inner membrane. Functionally, part of an energy-coupled inorganic carbon pump. The chain is Probable inorganic carbon transporter subunit DabA 2 from Bradyrhizobium sp. (strain ORS 278).